Consider the following 63-residue polypeptide: Large ribosomal subunit protein uL29 (63 aa).

This sequence belongs to the universal ribosomal protein uL29 family.

The chain is Large ribosomal subunit protein uL29 from Vibrio vulnificus (strain CMCP6).